A 368-amino-acid polypeptide reads, in one-letter code: RNA polymerase sigma factor SigA (368 aa).

A disordered region spans residues 60–86; it reads VVDENGDPSEHSLKKDEKEAEKAQAED. Basic and acidic residues predominate over residues 67–84; that stretch reads PSEHSLKKDEKEAEKAQA. A sigma-70 factor domain-2 region spans residues 135-205; sequence LAEANLRLVV…TRAIADQART (71 aa). The Interaction with polymerase core subunit RpoC signature appears at 159–162; the sequence is DLIQ. The interval 214 to 290 is sigma-70 factor domain-3; sequence ETINKLIRIQ…DQDATSPAEH (77 aa). A sigma-70 factor domain-4 region spans residues 303-356; sequence VLDTLTDREENVLRLRFGLDDGRTRTLEEVGKVFGVTRERIRQIEAKALRKLRH. Residues 329–348 constitute a DNA-binding region (H-T-H motif); sequence LEEVGKVFGVTRERIRQIEA.

Belongs to the sigma-70 factor family. RpoD/SigA subfamily. In terms of assembly, interacts transiently with the RNA polymerase catalytic core.

Its subcellular location is the cytoplasm. Sigma factors are initiation factors that promote the attachment of RNA polymerase to specific initiation sites and are then released. This sigma factor is the primary sigma factor during exponential growth. This chain is RNA polymerase sigma factor SigA, found in Enterococcus faecalis (strain ATCC 700802 / V583).